We begin with the raw amino-acid sequence, 450 residues long: Zinc finger protein 277 (450 aa).

At Ala-2 the chain carries N-acetylalanine. C2H2-type zinc fingers lie at residues 224–248 (LQCL…KKQH) and 355–381 (HQCR…ETKH).

Belongs to the ZNF277 family. In terms of assembly, interacts (via zinc-finger domains) with RPS2/40S ribosomal protein S2, perhaps as nascent RPS2 is synthesized during translation; the interaction is direct; the interaction is extra-ribosomal. Interaction with RPS2 competes with the binding of RPS2 to protein arginine methyltransferase PRMT3. Interacts with Polycomb group (PcG) complex protein BMI1. May be part of a complex including at least ZNF277, BMI1 and RNF2/RING2.

It localises to the nucleus. In terms of biological role, probable transcription factor. Involved in modulation of cellular senescence; represses transcription of the tumor suppressor gene INK4A/ARF, perhaps acting via the Polycomb group (PcG) complex PRC1. The protein is Zinc finger protein 277 (ZNF277) of Homo sapiens (Human).